A 759-amino-acid chain; its full sequence is 1,4-alpha-glucan branching enzyme GlgB (759 aa).

The active-site Nucleophile is the Asp-431. Catalysis depends on Glu-484, which acts as the Proton donor.

Belongs to the glycosyl hydrolase 13 family. GlgB subfamily. In terms of assembly, monomer.

The enzyme catalyses Transfers a segment of a (1-&gt;4)-alpha-D-glucan chain to a primary hydroxy group in a similar glucan chain.. It functions in the pathway glycan biosynthesis; glycogen biosynthesis. Functionally, catalyzes the formation of the alpha-1,6-glucosidic linkages in glycogen by scission of a 1,4-alpha-linked oligosaccharide from growing alpha-1,4-glucan chains and the subsequent attachment of the oligosaccharide to the alpha-1,6 position. This Prochlorococcus marinus (strain MIT 9211) protein is 1,4-alpha-glucan branching enzyme GlgB.